An 893-amino-acid polypeptide reads, in one-letter code: DNA mismatch repair protein MutS (893 aa).

638–645 (GPNMAGKS) is a binding site for ATP.

Belongs to the DNA mismatch repair MutS family.

In terms of biological role, this protein is involved in the repair of mismatches in DNA. It is possible that it carries out the mismatch recognition step. This protein has a weak ATPase activity. In Lawsonia intracellularis (strain PHE/MN1-00), this protein is DNA mismatch repair protein MutS.